The following is a 242-amino-acid chain: Ribonuclease 3 (242 aa).

Residues 14 to 142 (LRRFAARFAL…VIGALYLSTG (129 aa)) enclose the RNase III domain. Glu56 contributes to the Mg(2+) binding site. The active site involves Asp60. Mg(2+)-binding residues include Asp128 and Glu131. Glu131 is a catalytic residue. The 66-residue stretch at 170-235 (NHKSALQELT…ARGAYAALRS (66 aa)) folds into the DRBM domain.

The protein belongs to the ribonuclease III family. In terms of assembly, homodimer. The cofactor is Mg(2+).

It is found in the cytoplasm. It carries out the reaction Endonucleolytic cleavage to 5'-phosphomonoester.. Its function is as follows. Digests double-stranded RNA. Involved in the processing of primary rRNA transcript to yield the immediate precursors to the large and small rRNAs (23S and 16S). Processes some mRNAs, and tRNAs when they are encoded in the rRNA operon. Processes pre-crRNA and tracrRNA of type II CRISPR loci if present in the organism. The protein is Ribonuclease 3 of Gloeobacter violaceus (strain ATCC 29082 / PCC 7421).